The chain runs to 123 residues: Galanin peptides (123 aa).

The N-terminal stretch at 1–19 is a signal peptide; sequence MPRGCALLLASLLLASALS. A propeptide spanning residues 20 to 30 is cleaved from the precursor; it reads ATLGLGSPVKE. The residue at position 61 (Ala61) is an Alanine amide. Ser116 and Ser117 each carry phosphoserine.

Belongs to the galanin family.

It is found in the secreted. Functionally, endocrine hormone of the central and peripheral nervous systems that binds and activates the G protein-coupled receptors GALR1, GALR2, and GALR3. This small neuropeptide may regulate diverse physiologic functions including contraction of smooth muscle of the gastrointestinal and genitourinary tract, growth hormone and insulin release and adrenal secretion. This Sus scrofa (Pig) protein is Galanin peptides (GAL).